The sequence spans 603 residues: Serine/threonine-protein kinase PLK1 (603 aa).

Residue Lys19 forms a Glycyl lysine isopeptide (Lys-Gly) (interchain with G-Cter in ubiquitin) linkage. In terms of domain architecture, Protein kinase spans 53–305 (YVRGRFLGKG…IHELLNDEFF (253 aa)). ATP is bound by residues 59–67 (LGKGGFAKC) and Lys82. A Phosphoserine modification is found at Ser103. An ATP-binding site is contributed by Glu131. Ser137 carries the post-translational modification Phosphoserine. Asp176 functions as the Proton acceptor in the catalytic mechanism. ATP contacts are provided by residues 178-181 (KLGN) and Asp194. An activation loop region spans residues 194-221 (DFGLATKVEYEGERKKTLCGTPNYIAPE). Thr210 is modified (phosphothreonine; by AURKA). Thr214 bears the Phosphothreonine mark. Ser269 and Ser335 each carry phosphoserine; by autocatalysis. The short motif at 337–340 (RKPL) is the D-box that targets the protein for proteasomal degradation in anaphase element. Lys338 participates in a covalent cross-link: Glycyl lysine isopeptide (Lys-Gly) (interchain with G-Cter in SUMO2). A phosphoserine mark is found at Ser375 and Ser450. The 79-residue stretch at 410–488 (WVSKWVDYSD…LNYFRNYMSE (79 aa)) folds into the POLO box 1 domain. Lys492 participates in a covalent cross-link: Glycyl lysine isopeptide (Lys-Gly) (interchain with G-Cter in ubiquitin). The interval 493 to 507 (AGANITPREGDELAR) is linker. Position 498 is a phosphothreonine (Thr498). The POLO box 2 domain maps to 510-592 (YLRTWFRTRS…ARTMVDKLLS (83 aa)). The tract at residues 538–540 (HTK) is important for interaction with phosphorylated proteins.

Belongs to the protein kinase superfamily. Ser/Thr protein kinase family. CDC5/Polo subfamily. In terms of assembly, interacts with CEP170 and EVI5. Interacts and phosphorylates ERCC6L. Interacts with FAM29A. Interacts with SLX4/BTBD12 and TTDN1. Interacts with BUB1B. Interacts (via POLO-box domain) with the phosphorylated form of BUB1, CENPU and CDC25C. Interacts with isoform 3 of SGO1. Interacts with BORA, KIF2A and AURKA. Interacts with TOPORS and CYLD. Interacts with ECT2; the interaction is stimulated upon phosphorylation of ECT2 on 'Thr-444'. Interacts with PRC1. Interacts with KIF20A/MKLP2 (when phosphorylated), leading to the recruitment at the central spindle. Interacts (via POLO box domains) with PPP1R12A/MYPT1 (when previously phosphorylated by CDK1). Part of an astrin (SPAG5)-kinastrin (SKAP) complex containing KNSTRN, SPAG5, PLK1, DYNLL1 and SGO2A. Interacts with BIRC6/bruce. Interacts with CDK1-phosphorylated DCTN6 during mitotic prometaphase; the interaction facilitates recruitment to kinetochores. Interacts with CDK1-phosphorylated FRY; this interaction occurs in mitotic cells, but not in interphase cells. FRY interaction facilitates AURKA-mediated PLK1 phosphorylation. Interacts with CEP68; the interaction phosphorylates CEP68. Interacts (via POLO-box domain) with DCTN1. Interacts with CEP20 in later G1, S, G2 and M phases of the cell cycle; this interaction recruits PLK1 to centrosomes, a step required for S phase progression. Interacts with HSF1; this interaction increases upon heat shock but does not modulate neither HSF1 homotrimerization nor DNA-binding activities. Interacts with HNRNPU; this interaction induces phosphorylation of HNRNPU in mitosis. Interacts (via its N-terminus) with RIOK2. Interacts with KLHL22. Interacts (via POLO box domains) with NEDD9/HEF1 (via C-terminus). Interacts (via RVxF motif) with FIRRM; regulates PLK1 kinase activity. Interacts with SKA3; the interaction promotes the stability of PLK1. Interacts with the MTMR3:MTMR4 heterooligomer; brings CEP55 and PLK1 together during early mitosis, regulating the phosphorylation of CEP55 by PLK1 and its recruitment to the midbody where it can mediate cell abscission. Post-translationally, catalytic activity is enhanced by phosphorylation of Thr-210. Phosphorylation at Thr-210 is first detected on centrosomes in the G2 phase of the cell cycle, peaks in prometaphase and gradually disappears from centrosomes during anaphase. Dephosphorylation at Thr-210 at centrosomes is probably mediated by protein phosphatase 1C (PP1C), via interaction with PPP1R12A/MYPT1. Autophosphorylation and phosphorylation of Ser-137 may not be significant for the activation of PLK1 during mitosis, but may enhance catalytic activity during recovery after DNA damage checkpoint. Phosphorylated in vitro by STK10. Ubiquitinated by the anaphase promoting complex/cyclosome (APC/C) in anaphase and following DNA damage, leading to its degradation by the proteasome. Ubiquitination is mediated via its interaction with FZR1/CDH1. Ubiquitination and subsequent degradation prevents entry into mitosis and is essential to maintain an efficient G2 DNA damage checkpoint. Monoubiquitination at Lys-492 by the BCR(KLHL22) ubiquitin ligase complex does not lead to degradation: it promotes PLK1 dissociation from phosphoreceptor proteins and subsequent removal from kinetochores, allowing silencing of the spindle assembly checkpoint (SAC) and chromosome segregation. Newborn and adult spleen, fetal and newborn kidney, liver, brain, thymus and adult bone marrow, thymus, ovary and testes.

The protein resides in the nucleus. It localises to the chromosome. The protein localises to the centromere. Its subcellular location is the kinetochore. It is found in the cytoplasm. The protein resides in the cytoskeleton. It localises to the microtubule organizing center. The protein localises to the centrosome. Its subcellular location is the spindle. It is found in the midbody. The enzyme catalyses L-seryl-[protein] + ATP = O-phospho-L-seryl-[protein] + ADP + H(+). It carries out the reaction L-threonyl-[protein] + ATP = O-phospho-L-threonyl-[protein] + ADP + H(+). Its activity is regulated as follows. Activated by phosphorylation of Thr-210 by AURKA; phosphorylation by AURKA is enhanced by BORA. Once activated, activity is stimulated by binding target proteins. Binding of target proteins has no effect on the non-activated kinase. Several inhibitors targeting PLKs are currently in development and are under investigation in a growing number of clinical trials, such as BI 2536, an ATP-competitive PLK1 inhibitor or BI 6727, a dihydropteridinone that specifically inhibits the catalytic activity of PLK1. In terms of biological role, serine/threonine-protein kinase that performs several important functions throughout M phase of the cell cycle, including the regulation of centrosome maturation and spindle assembly, the removal of cohesins from chromosome arms, the inactivation of anaphase-promoting complex/cyclosome (APC/C) inhibitors, and the regulation of mitotic exit and cytokinesis. Polo-like kinase proteins act by binding and phosphorylating proteins that are already phosphorylated on a specific motif recognized by the POLO box domains. Phosphorylates BORA, BUB1B/BUBR1, CCNB1, CDC25C, CEP55, ECT2, ERCC6L, FBXO5/EMI1, FOXM1, KIF20A/MKLP2, CENPU, NEDD1, NINL, NPM1, NUDC, PKMYT1/MYT1, KIZ, MRE11, PPP1R12A/MYPT1, POLQ, PRC1, RACGAP1/CYK4, RAD51, RHNO1, SGO1, STAG2/SA2, TEX14, TOPORS, p73/TP73, TPT1, WEE1 and HNRNPU. Plays a key role in centrosome functions and the assembly of bipolar spindles by phosphorylating KIZ, NEDD1 and NINL. NEDD1 phosphorylation promotes subsequent targeting of the gamma-tubulin ring complex (gTuRC) to the centrosome, an important step for spindle formation. Phosphorylation of NINL component of the centrosome leads to NINL dissociation from other centrosomal proteins. Involved in mitosis exit and cytokinesis by phosphorylating CEP55, ECT2, KIF20A/MKLP2, CENPU, PRC1 and RACGAP1. Recruited at the central spindle by phosphorylating and docking PRC1 and KIF20A/MKLP2; creates its own docking sites on PRC1 and KIF20A/MKLP2 by mediating phosphorylation of sites subsequently recognized by the POLO box domains. Phosphorylates RACGAP1, thereby creating a docking site for the Rho GTP exchange factor ECT2 that is essential for the cleavage furrow formation. Promotes the central spindle recruitment of ECT2. Plays a central role in G2/M transition of mitotic cell cycle by phosphorylating CCNB1, CDC25C, FOXM1, CENPU, PKMYT1/MYT1, PPP1R12A/MYPT1 and WEE1. Part of a regulatory circuit that promotes the activation of CDK1 by phosphorylating the positive regulator CDC25C and inhibiting the negative regulators WEE1 and PKMYT1/MYT1. Also acts by mediating phosphorylation of cyclin-B1 (CCNB1) on centrosomes in prophase. Phosphorylates FOXM1, a key mitotic transcription regulator, leading to enhance FOXM1 transcriptional activity. Involved in kinetochore functions and sister chromatid cohesion by phosphorylating BUB1B/BUBR1, FBXO5/EMI1 and STAG2/SA2. PLK1 is high on non-attached kinetochores suggesting a role of PLK1 in kinetochore attachment or in spindle assembly checkpoint (SAC) regulation. Required for kinetochore localization of BUB1B. Regulates the dissociation of cohesin from chromosomes by phosphorylating cohesin subunits such as STAG2/SA2. Phosphorylates SGO1: required for spindle pole localization of isoform 3 of SGO1 and plays a role in regulating its centriole cohesion function. Mediates phosphorylation of FBXO5/EMI1, a negative regulator of the APC/C complex during prophase, leading to FBXO5/EMI1 ubiquitination and degradation by the proteasome. Acts as a negative regulator of p53 family members: phosphorylates TOPORS, leading to inhibit the sumoylation of p53/TP53 and simultaneously enhance the ubiquitination and subsequent degradation of p53/TP53. Phosphorylates the transactivation domain of the transcription factor p73/TP73, leading to inhibit p73/TP73-mediated transcriptional activation and pro-apoptotic functions. Phosphorylates BORA, and thereby promotes the degradation of BORA. Contributes to the regulation of AURKA function. Also required for recovery after DNA damage checkpoint and entry into mitosis. Phosphorylates MISP, leading to stabilization of cortical and astral microtubule attachments required for proper spindle positioning. Together with MEIKIN, acts as a regulator of kinetochore function during meiosis I: required both for mono-orientation of kinetochores on sister chromosomes and protection of centromeric cohesin from separase-mediated cleavage. Phosphorylates CEP68 and is required for its degradation. Regulates nuclear envelope breakdown during prophase by phosphorylating DCTN1 resulting in its localization in the nuclear envelope. Phosphorylates the heat shock transcription factor HSF1, promoting HSF1 nuclear translocation upon heat shock. Phosphorylates HSF1 also in the early mitotic period; this phosphorylation regulates HSF1 localization to the spindle pole, the recruitment of the SCF(BTRC) ubiquitin ligase complex induicing HSF1 degradation, and hence mitotic progression. Regulates mitotic progression by phosphorylating RIOK2. Through the phosphorylation of DZIP1 regulates the localization during mitosis of the BBSome, a ciliary protein complex involved in cilium biogenesis. Regulates DNA repair during mitosis by mediating phosphorylation of POLQ and RHNO1, thereby promoting POLQ recruitment to DNA damage sites. Phosphorylates ATXN10 which may play a role in the regulation of cytokinesis and may stimulate the proteasome-mediated degradation of ATXN10. This chain is Serine/threonine-protein kinase PLK1 (Plk1), found in Mus musculus (Mouse).